The primary structure comprises 113 residues: Large ribosomal subunit protein bL19 (113 aa).

Belongs to the bacterial ribosomal protein bL19 family.

This protein is located at the 30S-50S ribosomal subunit interface and may play a role in the structure and function of the aminoacyl-tRNA binding site. The protein is Large ribosomal subunit protein bL19 (rplS) of Mycobacterium bovis (strain ATCC BAA-935 / AF2122/97).